The following is a 304-amino-acid chain: Non-specific ribonucleoside hydrolase RihC (304 aa).

H233 is an active-site residue.

This sequence belongs to the IUNH family. RihC subfamily.

Functionally, hydrolyzes both purine and pyrimidine ribonucleosides with a broad-substrate specificity. In Klebsiella pneumoniae (strain 342), this protein is Non-specific ribonucleoside hydrolase RihC.